Reading from the N-terminus, the 276-residue chain is Large ribosomal subunit protein uL2 (276 aa).

Residues 219–276 are disordered; that stretch reads TVRGSVMNPNDHPHGGGEGKQPIGRKQQMTPWGKKARGIKTRDKKKASTSMIVRRRNG. Positions 252–276 are enriched in basic residues; sequence KKARGIKTRDKKKASTSMIVRRRNG.

Belongs to the universal ribosomal protein uL2 family. In terms of assembly, part of the 50S ribosomal subunit. Forms a bridge to the 30S subunit in the 70S ribosome.

Functionally, one of the primary rRNA binding proteins. Required for association of the 30S and 50S subunits to form the 70S ribosome, for tRNA binding and peptide bond formation. It has been suggested to have peptidyltransferase activity; this is somewhat controversial. Makes several contacts with the 16S rRNA in the 70S ribosome. In Acholeplasma laidlawii (strain PG-8A), this protein is Large ribosomal subunit protein uL2.